A 269-amino-acid polypeptide reads, in one-letter code: Tryptophan synthase alpha chain (269 aa).

Catalysis depends on proton acceptor residues Glu-49 and Asp-60.

Belongs to the TrpA family. In terms of assembly, tetramer of two alpha and two beta chains.

The enzyme catalyses (1S,2R)-1-C-(indol-3-yl)glycerol 3-phosphate + L-serine = D-glyceraldehyde 3-phosphate + L-tryptophan + H2O. It functions in the pathway amino-acid biosynthesis; L-tryptophan biosynthesis; L-tryptophan from chorismate: step 5/5. Its function is as follows. The alpha subunit is responsible for the aldol cleavage of indoleglycerol phosphate to indole and glyceraldehyde 3-phosphate. This is Tryptophan synthase alpha chain from Actinobacillus pleuropneumoniae serotype 5b (strain L20).